Consider the following 183-residue polypeptide: 2-hydroxy-1,4-benzoquinone reductase (183 aa).

Residues 11–18, 77–80, and S113 contribute to the FMN site; these read SLRRDSFN and EYNR.

It belongs to the SsuE family. As to quaternary structure, homotetramer. It depends on FMN as a cofactor.

The catalysed reaction is 2-hydroxy-1,4-benzoquinone + NADH + 2 H(+) = benzene-1,2,4-triol + NAD(+). Functionally, involved in the metabolism of 4-aminophenol. Catalyzes the reduction of the auto-oxidation product 2-hydroxy-1,4-benzoquinone back to hydroxyquinol. Has a broad substrate specificity toward benzoquinones, converting them to the corresponding 1,4-benzenediols. This is 2-hydroxy-1,4-benzoquinone reductase from Burkholderia sp.